Reading from the N-terminus, the 167-residue chain is MSTNFTFDKKNLNLAEDIIKKYPPHGKRSAILPLLDLAQRQNGGWLPVPAIEYVANMLEMPYMRAYEVATFYSMFNLKRVGKYHIQVCTTTPCWLHGSDDIMKICEKKLGIKLKETTEDQKFTLSEIECLGACVNAPVVQINDDYYEDLTEEKMEKLIDEYSNDFKN.

Cys88, Cys93, Cys129, and Cys133 together coordinate [2Fe-2S] cluster.

This sequence belongs to the complex I 24 kDa subunit family. [2Fe-2S] cluster serves as cofactor.

It carries out the reaction a quinone + NADH + 5 H(+)(in) = a quinol + NAD(+) + 4 H(+)(out). NDH-1 shuttles electrons from NADH, via FMN and iron-sulfur (Fe-S) centers, to quinones in the respiratory chain. Couples the redox reaction to proton translocation (for every two electrons transferred, four hydrogen ions are translocated across the cytoplasmic membrane), and thus conserves the redox energy in a proton gradient. This Rickettsia felis (strain ATCC VR-1525 / URRWXCal2) (Rickettsia azadi) protein is NADH-quinone oxidoreductase subunit E (nuoE).